The primary structure comprises 362 residues: 3-isopropylmalate dehydrogenase (362 aa).

NAD(+) is bound at residue 78 to 91 (GPKWETLPPDEQPE). 4 residues coordinate substrate: arginine 99, arginine 109, arginine 138, and aspartate 227. Residues aspartate 227, aspartate 251, and aspartate 255 each coordinate Mg(2+). 285–297 (GSAPDIAGQGIAN) is an NAD(+) binding site.

The protein belongs to the isocitrate and isopropylmalate dehydrogenases family. LeuB type 1 subfamily. In terms of assembly, homodimer. The cofactor is Mg(2+). It depends on Mn(2+) as a cofactor.

It localises to the cytoplasm. The enzyme catalyses (2R,3S)-3-isopropylmalate + NAD(+) = 4-methyl-2-oxopentanoate + CO2 + NADH. The protein operates within amino-acid biosynthesis; L-leucine biosynthesis; L-leucine from 3-methyl-2-oxobutanoate: step 3/4. In terms of biological role, catalyzes the oxidation of 3-carboxy-2-hydroxy-4-methylpentanoate (3-isopropylmalate) to 3-carboxy-4-methyl-2-oxopentanoate. The product decarboxylates to 4-methyl-2 oxopentanoate. This is 3-isopropylmalate dehydrogenase from Geobacter metallireducens (strain ATCC 53774 / DSM 7210 / GS-15).